We begin with the raw amino-acid sequence, 328 residues long: P2Y purinoceptor 3 (328 aa).

The Extracellular portion of the chain corresponds to 1 to 22 (MSMANFTAGRNSCTFQEEFKQV). Residue Asn-5 is glycosylated (N-linked (GlcNAc...) asparagine). A helical membrane pass occupies residues 23–43 (LLPLVYSVVFLLGLPLNAVVI). At 44 to 57 (GQIWLARKALTRTT) the chain is on the cytoplasmic side. The helical transmembrane segment at 58 to 78 (IYMLNLATADLLYVCSLPLLI) threads the bilayer. Over 79–96 (YNYTQKDYWPFGDFTCKF) the chain is Extracellular. A disulfide bridge connects residues Cys-94 and Cys-172. The chain crosses the membrane as a helical span at residues 97–117 (VRFQFYTNLHGSILFLTCISV). Residues 118-139 (QRYMGICHPLASWHKKKGKKLT) lie on the Cytoplasmic side of the membrane. A helical transmembrane segment spans residues 140–160 (WLVCAAVWFIVIAQCLPTFVF). Over 161-189 (ASTGTQRNRTVCYDLSPPDRSASYFPYGI) the chain is Extracellular. A helical transmembrane segment spans residues 190–210 (TLTITGFLLPFAAILACYCSM). Residues 211-231 (ARILCQKDELIGLAVHKKKDK) lie on the Cytoplasmic side of the membrane. A helical transmembrane segment spans residues 232–252 (AVRMIIIVVIVFSISFFPFHL). Over 253–275 (TKTIYLIVRSSPTLPCPTLQAFA) the chain is Extracellular. The helical transmembrane segment at 276-298 (IAYKCTRPFASMNSVLDPILFYF) threads the bilayer. Over 299–323 (TQRKFRESTRYLLDKMSSKWRHDHC) the chain is Cytoplasmic.

The protein belongs to the G-protein coupled receptor 1 family.

It is found in the cell membrane. Receptor for extracellular UDP &gt; ADP = UTP. The activity of this receptor is mediated by G proteins which activate a phosphatidylinositol-calcium second messenger system. The protein is P2Y purinoceptor 3 (P2RY3) of Meleagris gallopavo (Wild turkey).